The primary structure comprises 808 residues: Probable E3 ubiquitin-protein ligase hulA (808 aa).

A C2 domain is found at 1 to 112 (MGSNLPAQPN…QMGGDEMLTR (112 aa)). 2 disordered regions span residues 134-231 (NLST…GWER) and 275-346 (RRAH…YFVD). 2 stretches are compositionally biased toward polar residues: residues 142–159 (QANGLHRSNLQSSTSSGL) and 171–198 (GPSQLDPTASNPSLNPQRVPSTTRPSST). Residues 199–210 (VAPVNGAAAPGA) show a composition bias toward low complexity. Polar residues predominate over residues 211–220 (SRTNLSSFED). Residues 223 to 256 (GRLPAGWERREDNLGRTYYVDHNTRTTTWTRPSS) enclose the WW 1 domain. Residues 275 to 288 (RRAHQSRMLPEDRT) are compositionally biased toward basic and acidic residues. Polar residues predominate over residues 289 to 303 (GASSPNLQENQQAQT). The span at 317–326 (ATGATTAGTG) shows a compositional bias: low complexity. 2 consecutive WW domains span residues 326-359 (GELPPGWEQRTTPEGRPYFVDHNTRTTTWVDPRR) and 386-419 (GPLPSGWEMRLTNTARVYFVDHNTKTTTWDDPRL). An HECT domain is found at 475–808 (SASDLKKRLM…VEETLGFGQE (334 aa)). C776 serves as the catalytic Glycyl thioester intermediate.

Belongs to the RSP5/NEDD4 family. Interacts with creD.

It localises to the cytoplasm. It carries out the reaction S-ubiquitinyl-[E2 ubiquitin-conjugating enzyme]-L-cysteine + [acceptor protein]-L-lysine = [E2 ubiquitin-conjugating enzyme]-L-cysteine + N(6)-ubiquitinyl-[acceptor protein]-L-lysine.. It functions in the pathway protein modification; protein ubiquitination. Functionally, E3 ubiquitin-protein ligase which accepts ubiquitin from an E2 ubiquitin-conjugating enzyme in the form of a thioester and then directly transfers the ubiquitin to targeted substrates. Probably involved in the regulatory network controlling carbon source utilization. In Aspergillus terreus (strain NIH 2624 / FGSC A1156), this protein is Probable E3 ubiquitin-protein ligase hulA (hulA).